A 378-amino-acid polypeptide reads, in one-letter code: Protein RecA (378 aa).

An ATP-binding site is contributed by 79 to 86 (GPESSGKT).

It belongs to the RecA family.

It is found in the cytoplasm. Functionally, can catalyze the hydrolysis of ATP in the presence of single-stranded DNA, the ATP-dependent uptake of single-stranded DNA by duplex DNA, and the ATP-dependent hybridization of homologous single-stranded DNAs. It interacts with LexA causing its activation and leading to its autocatalytic cleavage. This is Protein RecA from Streptococcus equi subsp. zooepidemicus (strain MGCS10565).